The chain runs to 194 residues: Early growth response protein 1 (194 aa).

3 consecutive C2H2-type zinc fingers follow at residues 1 to 18 (CDRR…IRIH), 24 to 46 (FQCR…IRTH), and 52 to 74 (FACD…TKIH).

The protein belongs to the EGR C2H2-type zinc-finger protein family.

It localises to the nucleus. It is found in the cytoplasm. Transcriptional regulator. Recognizes and binds to the DNA sequence 5'-GCG(T/G)GGGCG-3'(EGR-site) in the promoter region of target genes. Binds double-stranded target DNA, irrespective of the cytosine methylation status. Regulates the transcription of numerous target genes, and thereby plays an important role in regulating the response to growth factors, DNA damage, and ischemia. Plays a role in the regulation of cell survival, proliferation and cell death. Mediates responses to ischemia and hypoxia; regulates the expression of proteins that are involved in inflammatory processes. Plays a role in regulating the expression of circadian clock genes. The protein is Early growth response protein 1 (EGR1) of Gallus gallus (Chicken).